Here is a 317-residue protein sequence, read N- to C-terminus: Protease HtpX homolog (317 aa).

Helical transmembrane passes span 6 to 26 (TAIL…AIGG) and 28 to 48 (GGMM…YWNS). Zn(2+) is bound at residue His130. Glu131 is an active-site residue. A Zn(2+)-binding site is contributed by His134. 2 helical membrane passes run 145 to 165 (MTAT…LFGG) and 173 to 193 (PFGA…AMLV). Glu202 is a binding site for Zn(2+). The tract at residues 283-317 (GGGGFAPGPAPAVRPPGGNPWGVDPGGGQRRGPWG) is disordered. The segment covering 290–300 (GPAPAVRPPGG) has biased composition (pro residues). Gly residues predominate over residues 306-317 (DPGGGQRRGPWG).

The protein belongs to the peptidase M48B family. Zn(2+) serves as cofactor.

It is found in the cell inner membrane. This is Protease HtpX homolog from Xanthobacter autotrophicus (strain ATCC BAA-1158 / Py2).